The sequence spans 100 residues: NADH-quinone oxidoreductase subunit K 1 (100 aa).

Transmembrane regions (helical) follow at residues 4 to 24, 29 to 49, and 60 to 80; these read LNNYLIISAILFSIGTIGVLV, IVIFMCVEMMLNAVNLTFIAF, and IFVFFVMTVAAAEAAVGLALM.

The protein belongs to the complex I subunit 4L family. NDH-1 is composed of 14 different subunits. Subunits NuoA, H, J, K, L, M, N constitute the membrane sector of the complex.

Its subcellular location is the cell inner membrane. The catalysed reaction is a quinone + NADH + 5 H(+)(in) = a quinol + NAD(+) + 4 H(+)(out). NDH-1 shuttles electrons from NADH, via FMN and iron-sulfur (Fe-S) centers, to quinones in the respiratory chain. The immediate electron acceptor for the enzyme in this species is believed to be ubiquinone. Couples the redox reaction to proton translocation (for every two electrons transferred, four hydrogen ions are translocated across the cytoplasmic membrane), and thus conserves the redox energy in a proton gradient. This Geotalea daltonii (strain DSM 22248 / JCM 15807 / FRC-32) (Geobacter daltonii) protein is NADH-quinone oxidoreductase subunit K 1.